The chain runs to 351 residues: Apolipoprotein L4 (351 aa).

The N-terminal stretch at 1–21 is a signal peptide; that stretch reads MEGAALLKIFVVCIWVQQNHP.

Belongs to the apolipoprotein L family. As to expression, widely expressed; the highest levels are in spinal cord, placenta, adrenal gland; also detected in spleen, bone marrow, uterus, trachea, mammary gland and testis; levels are low in brain, heart and pancreas.

Its subcellular location is the secreted. May play a role in lipid exchange and transport throughout the body. May participate in reverse cholesterol transport from peripheral cells to the liver. The protein is Apolipoprotein L4 (APOL4) of Homo sapiens (Human).